We begin with the raw amino-acid sequence, 425 residues long: MAKQIQAIRGMNDILPTQSPLWQKVEAVLRSSVAAYGYSEIRTPIVENTDLFKRSIGEVTDIVEKEMYTFEDRNGDSLTLRPEGTASTVRAGNEHGLLYNQEQRLWYMGPMFRHERPQKGRYRQFHQFGVEIYGIGSADIDAEVLMLSARLWEKLGITEHVTLELNTLGDPAERAAYREALIAFLEQHKDKLDEDSQRRMYSNPLRVLDSKDPQVQSILADAPALMDYLGEESSQHFAQLRELLDAVGIQYRVNSRLVRGLDYYNRTVFEWVTNSLGSQGTVLAGGRYDGLVAQLGGKETPAVGFAMGLERIVLLLETLALTQDIPAEVDVYVAAMGDNCLVEAIKVAQELRSALPTLRVMSHCGGGNLKKQMKRADKSGAQVALLIGEEELAEGVVTVKYLRNDNEQQRVARNALSAFLAELTK.

This sequence belongs to the class-II aminoacyl-tRNA synthetase family. Homodimer.

It localises to the cytoplasm. The catalysed reaction is tRNA(His) + L-histidine + ATP = L-histidyl-tRNA(His) + AMP + diphosphate + H(+). The sequence is that of Histidine--tRNA ligase from Shewanella oneidensis (strain ATCC 700550 / JCM 31522 / CIP 106686 / LMG 19005 / NCIMB 14063 / MR-1).